The chain runs to 209 residues: Large ribosomal subunit protein uL3 (209 aa).

The interval 127 to 151 is disordered; the sequence is SGGPSSHGSKFHRHLGGTGQATTPA.

Belongs to the universal ribosomal protein uL3 family. Part of the 50S ribosomal subunit. Forms a cluster with proteins L14 and L19.

Its function is as follows. One of the primary rRNA binding proteins, it binds directly near the 3'-end of the 23S rRNA, where it nucleates assembly of the 50S subunit. The sequence is that of Large ribosomal subunit protein uL3 from Borrelia turicatae (strain 91E135).